Reading from the N-terminus, the 437-residue chain is UDP-N-acetylmuramate--L-alanine ligase (437 aa).

Residue 108–114 participates in ATP binding; the sequence is GAHGKTS.

Belongs to the MurCDEF family.

It localises to the cytoplasm. It carries out the reaction UDP-N-acetyl-alpha-D-muramate + L-alanine + ATP = UDP-N-acetyl-alpha-D-muramoyl-L-alanine + ADP + phosphate + H(+). Its pathway is cell wall biogenesis; peptidoglycan biosynthesis. Its function is as follows. Cell wall formation. The chain is UDP-N-acetylmuramate--L-alanine ligase from Staphylococcus aureus (strain COL).